Reading from the N-terminus, the 408-residue chain is Argininosuccinate synthase (408 aa).

ATP-binding positions include 11 to 19 (AYSGGLDTS) and A38. L-citrulline is bound by residues Y91 and S96. G121 contacts ATP. T123, N127, and D128 together coordinate L-aspartate. N127 contributes to the L-citrulline binding site. Residues R131, S182, S191, E267, and Y279 each coordinate L-citrulline.

It belongs to the argininosuccinate synthase family. Type 1 subfamily. Homotetramer.

It is found in the cytoplasm. The catalysed reaction is L-citrulline + L-aspartate + ATP = 2-(N(omega)-L-arginino)succinate + AMP + diphosphate + H(+). The protein operates within amino-acid biosynthesis; L-arginine biosynthesis; L-arginine from L-ornithine and carbamoyl phosphate: step 2/3. The protein is Argininosuccinate synthase of Zymomonas mobilis subsp. mobilis (strain ATCC 31821 / ZM4 / CP4).